Consider the following 281-residue polypeptide: 2-dehydro-3-deoxyphosphooctonate aldolase (281 aa).

It belongs to the KdsA family.

The protein localises to the cytoplasm. The enzyme catalyses D-arabinose 5-phosphate + phosphoenolpyruvate + H2O = 3-deoxy-alpha-D-manno-2-octulosonate-8-phosphate + phosphate. Its pathway is carbohydrate biosynthesis; 3-deoxy-D-manno-octulosonate biosynthesis; 3-deoxy-D-manno-octulosonate from D-ribulose 5-phosphate: step 2/3. The protein operates within bacterial outer membrane biogenesis; lipopolysaccharide biosynthesis. This Janthinobacterium sp. (strain Marseille) (Minibacterium massiliensis) protein is 2-dehydro-3-deoxyphosphooctonate aldolase.